Consider the following 42-residue polypeptide: uncharacterized protein (42 aa).

Its subcellular location is the plastid. The protein localises to the chloroplast. This is an uncharacterized protein from Diacronema lutheri (Unicellular marine alga).